Here is a 144-residue protein sequence, read N- to C-terminus: UPF0102 protein BTH_I3148 (144 aa).

Positions 1-20 (MCHARAARQATGEAEAAPRD) are disordered.

This sequence belongs to the UPF0102 family.

The sequence is that of UPF0102 protein BTH_I3148 from Burkholderia thailandensis (strain ATCC 700388 / DSM 13276 / CCUG 48851 / CIP 106301 / E264).